A 346-amino-acid chain; its full sequence is DNA-directed RNA polymerases I and III subunit RPAC1 (346 aa).

N-acetylalanine is present on A2. The residue at position 4 (S4) is a Phosphoserine.

It belongs to the archaeal Rpo3/eukaryotic RPB3 RNA polymerase subunit family. Component of the RNA polymerase I and RNA polymerase III complexes consisting of at least 13 and 17 subunits, respectively. Pol I complex consists of a ten-subunit catalytic core composed of POLR1A/RPA1, POLR1B/RPA2, POLR1C/RPAC1, POLR1D/RPAC2, POLR1H/RPA12, POLR2E/RPABC1, POLR2F/RPABC2, POLR2H/RPABC3, POLR2K/RPABC4 and POLR2L/RPABC5; a mobile stalk subunit POLR1F/RPA43 protruding from the core and additional subunits homologous to general transcription factors POLR1E/RPA49 and POLR1G/RPA34. Part of Pol I pre-initiation complex (PIC), in which Pol I core assembles with RRN3 and promoter-bound UTBF and SL1/TIF-IB complex. Pol III complex consists of a ten-subunit catalytic core composed of POLR3A/RPC1, POLR3B/RPC2, POLR1C/RPAC1, POLR1D/RPAC2, POLR3K/RPC10, POLR2E/RPABC1, POLR2F/RPABC2, POLR2H/RPABC3, POLR2K/RPABC4 and POLR2L/RPABC5; a mobile stalk composed of two subunits POLR3H/RPC8 and CRCP/RPC9, protruding from the core and functioning primarily in transcription initiation; and additional subunits homologous to general transcription factors of the RNA polymerase II machinery, POLR3C/RPC3-POLR3F/RPC6-POLR3G/RPC7 heterotrimer required for transcription initiation and POLR3D/RPC4-POLR3E/RPC5 heterodimer involved in both transcription initiation and termination.

It localises to the nucleus. It is found in the nucleolus. Its subcellular location is the cytoplasm. The protein localises to the cytosol. In terms of biological role, DNA-dependent RNA polymerase catalyzes the transcription of DNA into RNA using the four ribonucleoside triphosphates as substrates. Common component of RNA polymerases I and III which synthesize ribosomal RNA precursors and short non-coding RNAs including 5S rRNA, snRNAs, tRNAs and miRNAs, respectively. POLR1C/RPAC1 is part of the polymerase core and may function as a clamp element that moves to open and close the cleft. The polypeptide is DNA-directed RNA polymerases I and III subunit RPAC1 (Homo sapiens (Human)).